The following is a 293-amino-acid chain: Protein transport protein yif1 (293 aa).

Residues 1–139 (MPPKLYHPQP…PPAEDLNSPD (139 aa)) lie on the Cytoplasmic side of the membrane. The helical transmembrane segment at 140–160 (MYIPLMAFTTHILLLCALAGL) threads the bilayer. At 161 to 175 (QDDFQPELFGLRASK) the chain is on the lumenal side. Residues 176 to 196 (ACAVVLVEFLATRLGCYLLNI) traverse the membrane as a helical segment. At 197–201 (SSQSQ) the chain is on the cytoplasmic side. Residues 202-222 (VLDLLAFSGYKFVGLILTSLS) traverse the membrane as a helical segment. Topologically, residues 223 to 226 (KLFE) are lumenal. The chain crosses the membrane as a helical span at residues 227-247 (MPWVTRFVFLYMYLATAFFLL). Residues 248 to 271 (RSLKYAVLPESTMAINATITSHQR) lie on the Cytoplasmic side of the membrane. A helical transmembrane segment spans residues 272–292 (SRRIYFLFFIAASQILFMYVL). A topological domain (lumenal) is located at residue Ser-293.

Belongs to the YIF1 family. As to quaternary structure, component of the yip1-yif1 complex, composed of at least yif1, yip1 and yos1. The complex interacts with the ER to Golgi SNAREs bos1 and sec22.

The protein resides in the endoplasmic reticulum membrane. It localises to the golgi apparatus membrane. Its subcellular location is the cytoplasmic vesicle. The protein localises to the COPII-coated vesicle. Required for fusion of ER-derived vesicles with the Golgi during ER-to-Golgi protein transport. May be involved in proper membrane localization of Rab GTPases. The sequence is that of Protein transport protein yif1 from Schizosaccharomyces pombe (strain 972 / ATCC 24843) (Fission yeast).